A 393-amino-acid chain; its full sequence is NAD(P)H-quinone oxidoreductase subunit H, chloroplastic (393 aa).

It belongs to the complex I 49 kDa subunit family. In terms of assembly, NDH is composed of at least 16 different subunits, 5 of which are encoded in the nucleus.

The protein resides in the plastid. The protein localises to the chloroplast thylakoid membrane. The enzyme catalyses a plastoquinone + NADH + (n+1) H(+)(in) = a plastoquinol + NAD(+) + n H(+)(out). It carries out the reaction a plastoquinone + NADPH + (n+1) H(+)(in) = a plastoquinol + NADP(+) + n H(+)(out). Functionally, NDH shuttles electrons from NAD(P)H:plastoquinone, via FMN and iron-sulfur (Fe-S) centers, to quinones in the photosynthetic chain and possibly in a chloroplast respiratory chain. The immediate electron acceptor for the enzyme in this species is believed to be plastoquinone. Couples the redox reaction to proton translocation, and thus conserves the redox energy in a proton gradient. The polypeptide is NAD(P)H-quinone oxidoreductase subunit H, chloroplastic (Drimys granadensis).